Here is a 564-residue protein sequence, read N- to C-terminus: Proline--tRNA ligase (564 aa).

This sequence belongs to the class-II aminoacyl-tRNA synthetase family. ProS type 1 subfamily. Homodimer.

The protein resides in the cytoplasm. The catalysed reaction is tRNA(Pro) + L-proline + ATP = L-prolyl-tRNA(Pro) + AMP + diphosphate. Its function is as follows. Catalyzes the attachment of proline to tRNA(Pro) in a two-step reaction: proline is first activated by ATP to form Pro-AMP and then transferred to the acceptor end of tRNA(Pro). As ProRS can inadvertently accommodate and process non-cognate amino acids such as alanine and cysteine, to avoid such errors it has two additional distinct editing activities against alanine. One activity is designated as 'pretransfer' editing and involves the tRNA(Pro)-independent hydrolysis of activated Ala-AMP. The other activity is designated 'posttransfer' editing and involves deacylation of mischarged Ala-tRNA(Pro). The misacylated Cys-tRNA(Pro) is not edited by ProRS. This Bacillus velezensis (strain DSM 23117 / BGSC 10A6 / LMG 26770 / FZB42) (Bacillus amyloliquefaciens subsp. plantarum) protein is Proline--tRNA ligase.